The primary structure comprises 425 residues: Serine--tRNA ligase (425 aa).

Residue 233 to 235 (TAE) coordinates L-serine. 264–266 (RRE) contributes to the ATP binding site. L-serine is bound at residue glutamate 287. An ATP-binding site is contributed by 351–354 (EVSS). Serine 386 contacts L-serine.

The protein belongs to the class-II aminoacyl-tRNA synthetase family. Type-1 seryl-tRNA synthetase subfamily. As to quaternary structure, homodimer. The tRNA molecule binds across the dimer.

Its subcellular location is the cytoplasm. The catalysed reaction is tRNA(Ser) + L-serine + ATP = L-seryl-tRNA(Ser) + AMP + diphosphate + H(+). It carries out the reaction tRNA(Sec) + L-serine + ATP = L-seryl-tRNA(Sec) + AMP + diphosphate + H(+). It participates in aminoacyl-tRNA biosynthesis; selenocysteinyl-tRNA(Sec) biosynthesis; L-seryl-tRNA(Sec) from L-serine and tRNA(Sec): step 1/1. Catalyzes the attachment of serine to tRNA(Ser). Is also able to aminoacylate tRNA(Sec) with serine, to form the misacylated tRNA L-seryl-tRNA(Sec), which will be further converted into selenocysteinyl-tRNA(Sec). This Thermosipho melanesiensis (strain DSM 12029 / CIP 104789 / BI429) protein is Serine--tRNA ligase.